The sequence spans 360 residues: G-protein coupled receptor 15 (360 aa).

Residues 1–33 (MDPEETSVYLDYYYATSPNPDIRETHSHVPYTS) are Extracellular-facing. The helical transmembrane segment at 34–54 (VFLPVFYIAVFLTGVLGNLVL) threads the bilayer. Residues 55 to 69 (MGALHFKPGSRRLID) are Cytoplasmic-facing. Residues 70 to 90 (IFIINLAASDFIFLVTLPLWV) traverse the membrane as a helical segment. Topologically, residues 91–120 (DKEASLGLWRTGSFLCKGSSYMISVNMHCS) are extracellular. The helical transmembrane segment at 121 to 141 (VFLLTCMSVDRYLAIVCPVVS) threads the bilayer. Residues 142-149 (RKFRRTDC) are Cytoplasmic-facing. A helical membrane pass occupies residues 150 to 170 (AYVVCASIWFISCLLGLPTLL). The Extracellular segment spans residues 171–192 (SRELTLIDDKPYCAEKKATPLK). Residues 193–213 (LIWSLVALIFTFFVPLLSIVT) traverse the membrane as a helical segment. Residues 214-239 (CYCRIARKLCAHYQQSGKHNKKLKKS) lie on the Cytoplasmic side of the membrane. The helical transmembrane segment at 240–260 (IKIIFIVVAAFLVSWLPFNTS) threads the bilayer. Topologically, residues 261-284 (KLLAIVSGLQQERYFPSAILQLGM) are extracellular. A helical membrane pass occupies residues 285–305 (EVSGPLAFANSCVNPFIYYIF). The Cytoplasmic segment spans residues 306–360 (DSYIRRAIVHCLCPCLKNYDFGSSTETSDSHLTKALSTFIHAEDFTRRRKRSVSL). Ser-359 is subject to Phosphoserine.

It belongs to the G-protein coupled receptor 1 family. As to quaternary structure, interacts with adapter YWHAE; this interaction promotes ER-to-Golgi transport of GPR15. In terms of processing, phosphorylation is necessary for YWHAE binding and efficient surface expression. O-glycosylated. Sialylated O-glycans in the N-terminal tail inhibits binding of GPR15LG. Post-translationally, sulfation is required for efficient binding of GPR15LG.

Its subcellular location is the cell membrane. Functionally, g protein-coupled receptor that plays an important role in immune homeostasis. Acts via its natural ligand GPR15LG, a chemokine-like polypeptide strongly expressed in gastrointestinal tissues. GPR15-GPR15LG signaling axis regulates intestinal homeostasis and inflammation through the migration of immune cells. Controls thereby the specific homing of T-cells, particularly FOXP3+ regulatory T-cells (Tregs), to the large intestine lamina propria. Also required for skin localization of thymus-derived dendritic epidermal T-cells. Plays an important role in mediating cytoprotective function as well as angiogenesis of thrombomodulin. Mechanistically, preferentially signals through the Gi/o pathway to inhibit adenylate cyclase activity and activate a phosphatidylinositol-calcium second messenger system that regulates the release of Ca(2+) ions from intracellular stores. The chain is G-protein coupled receptor 15 (GPR15) from Chlorocebus aethiops (Green monkey).